Here is a 568-residue protein sequence, read N- to C-terminus: CTP synthase (568 aa).

The tract at residues 1 to 276 (MPQARTIKHV…DAYLVRRLGL (276 aa)) is amidoligase domain. Position 18 (Ser18) interacts with CTP. Residue Ser18 participates in UTP binding. ATP contacts are provided by residues 19-24 (SLGKGL) and Asp76. Mg(2+) is bound by residues Asp76 and Glu150. CTP contacts are provided by residues 157 to 159 (DIE), 197 to 202 (KTKPTQ), and Lys233. UTP is bound by residues 197–202 (KTKPTQ) and Lys233. The Glutamine amidotransferase type-1 domain maps to 301 to 550 (RIALVGKYVD…VNAALEYRAA (250 aa)). Gly364 is a binding site for L-glutamine. Cys391 acts as the Nucleophile; for glutamine hydrolysis in catalysis. L-glutamine is bound by residues 392–395 (LGLQ), Glu415, and Arg476. Residues His523 and Glu525 contribute to the active site.

This sequence belongs to the CTP synthase family. As to quaternary structure, homotetramer.

It carries out the reaction UTP + L-glutamine + ATP + H2O = CTP + L-glutamate + ADP + phosphate + 2 H(+). It catalyses the reaction L-glutamine + H2O = L-glutamate + NH4(+). The catalysed reaction is UTP + NH4(+) + ATP = CTP + ADP + phosphate + 2 H(+). The protein operates within pyrimidine metabolism; CTP biosynthesis via de novo pathway; CTP from UDP: step 2/2. With respect to regulation, allosterically activated by GTP, when glutamine is the substrate; GTP has no effect on the reaction when ammonia is the substrate. The allosteric effector GTP functions by stabilizing the protein conformation that binds the tetrahedral intermediate(s) formed during glutamine hydrolysis. Inhibited by the product CTP, via allosteric rather than competitive inhibition. Functionally, catalyzes the ATP-dependent amination of UTP to CTP with either L-glutamine or ammonia as the source of nitrogen. Regulates intracellular CTP levels through interactions with the four ribonucleotide triphosphates. The polypeptide is CTP synthase (Saccharopolyspora erythraea (strain ATCC 11635 / DSM 40517 / JCM 4748 / NBRC 13426 / NCIMB 8594 / NRRL 2338)).